The following is a 334-amino-acid chain: Probable GTP 3',8-cyclase (334 aa).

The Radical SAM core domain occupies 24–256; the sequence is PYGRKVTGLR…RKKYMIDGVE (233 aa). Arginine 33 contacts GTP. [4Fe-4S] cluster is bound by residues cysteine 40 and cysteine 44. Tyrosine 46 provides a ligand contact to S-adenosyl-L-methionine. Cysteine 47 contacts [4Fe-4S] cluster. GTP is bound at residue lysine 85. Residue glycine 89 participates in S-adenosyl-L-methionine binding. Threonine 113 lines the GTP pocket. S-adenosyl-L-methionine is bound at residue serine 137. Lysine 176 is a GTP binding site. [4Fe-4S] cluster-binding residues include cysteine 269 and cysteine 272. 274 to 276 serves as a coordination point for GTP; sequence RLR. A [4Fe-4S] cluster-binding site is contributed by cysteine 286.

This sequence belongs to the radical SAM superfamily. MoaA family. It depends on [4Fe-4S] cluster as a cofactor.

The catalysed reaction is GTP + AH2 + S-adenosyl-L-methionine = (8S)-3',8-cyclo-7,8-dihydroguanosine 5'-triphosphate + 5'-deoxyadenosine + L-methionine + A + H(+). It functions in the pathway cofactor biosynthesis; molybdopterin biosynthesis. Functionally, catalyzes the cyclization of GTP to (8S)-3',8-cyclo-7,8-dihydroguanosine 5'-triphosphate. The sequence is that of Probable GTP 3',8-cyclase from Methanosarcina mazei (strain ATCC BAA-159 / DSM 3647 / Goe1 / Go1 / JCM 11833 / OCM 88) (Methanosarcina frisia).